The primary structure comprises 362 residues: Forkhead box protein F (362 aa).

Residues 19–70 (LDSTAPNNSHRTIKAENYFNEDEEDYNENSHEDSEDSKEDSDGQGCRSRKRK) form a disordered region. Acidic residues predominate over residues 37–57 (FNEDEEDYNENSHEDSEDSKE). Positions 72–169 (KPPFSYIALI…EENGFRRRPR (98 aa)) form a DNA-binding region, fork-head.

It is found in the nucleus. In terms of biological role, transcription factor that is required for cell fate of coelomocytes which are non-muscle mesodermal cells. Acts in concert with, and by activating expression of, the homeodomain gene ceh-34. Binds to the sequence motif 5'-ATAAA[T/C]A-3'. The polypeptide is Forkhead box protein F (Caenorhabditis elegans).